A 447-amino-acid polypeptide reads, in one-letter code: N-succinylarginine dihydrolase (447 aa).

Residues 19-28, Asn-110, and 137-138 each bind substrate; these read AGLSFGNEAS and HR. Glu-174 is a catalytic residue. Residue Arg-212 participates in substrate binding. His-248 is a catalytic residue. Residues Asp-250 and Asn-359 each contribute to the substrate site. Catalysis depends on Cys-365, which acts as the Nucleophile.

Belongs to the succinylarginine dihydrolase family. Homodimer.

It catalyses the reaction N(2)-succinyl-L-arginine + 2 H2O + 2 H(+) = N(2)-succinyl-L-ornithine + 2 NH4(+) + CO2. It participates in amino-acid degradation; L-arginine degradation via AST pathway; L-glutamate and succinate from L-arginine: step 2/5. Catalyzes the hydrolysis of N(2)-succinylarginine into N(2)-succinylornithine, ammonia and CO(2). This is N-succinylarginine dihydrolase from Escherichia coli (strain K12 / MC4100 / BW2952).